Here is a 438-residue protein sequence, read N- to C-terminus: 3-phosphoshikimate 1-carboxyvinyltransferase (438 aa).

3 residues coordinate 3-phosphoshikimate: Lys26, Ser27, and Arg31. Phosphoenolpyruvate is bound at residue Lys26. Phosphoenolpyruvate contacts are provided by Gly99 and Arg127. Ser170, Ser171, Gln172, Ser199, Glu314, and His343 together coordinate 3-phosphoshikimate. Residue Gln172 coordinates phosphoenolpyruvate. The Proton acceptor role is filled by Glu314. The phosphoenolpyruvate site is built by Arg347, Arg388, and Lys413.

Belongs to the EPSP synthase family. In terms of assembly, monomer.

Its subcellular location is the cytoplasm. The enzyme catalyses 3-phosphoshikimate + phosphoenolpyruvate = 5-O-(1-carboxyvinyl)-3-phosphoshikimate + phosphate. It participates in metabolic intermediate biosynthesis; chorismate biosynthesis; chorismate from D-erythrose 4-phosphate and phosphoenolpyruvate: step 6/7. In terms of biological role, catalyzes the transfer of the enolpyruvyl moiety of phosphoenolpyruvate (PEP) to the 5-hydroxyl of shikimate-3-phosphate (S3P) to produce enolpyruvyl shikimate-3-phosphate and inorganic phosphate. This Mycobacterium sp. (strain MCS) protein is 3-phosphoshikimate 1-carboxyvinyltransferase.